A 240-amino-acid chain; its full sequence is Protein Thf1 (240 aa).

Residues 186–222 (KDLDLYRSNLEKVDQLLKVLEDAAEAERKKKEKQAAS) adopt a coiled-coil conformation. Residues 212–240 (ERKKKEKQAASTTPAIEEAPVTTAESSES) are disordered.

It belongs to the THF1 family.

In terms of biological role, may be involved in photosynthetic membrane biogenesis. This chain is Protein Thf1, found in Synechocystis sp. (strain ATCC 27184 / PCC 6803 / Kazusa).